A 509-amino-acid chain; its full sequence is Heat shock 70 kDa protein 14 (509 aa).

This sequence belongs to the heat shock protein 70 family. Component of ribosome-associated complex (RAC), a heterodimer composed of Hsp70/DnaK-type chaperone HSPA14 and Hsp40/DnaJ-type chaperone DNAJC2.

The protein localises to the cytoplasm. The protein resides in the cytosol. In terms of biological role, component of the ribosome-associated complex (RAC), a complex involved in folding or maintaining nascent polypeptides in a folding-competent state. In the RAC complex, binds to the nascent polypeptide chain, while DNAJC2 stimulates its ATPase activity. The chain is Heat shock 70 kDa protein 14 (HSPA14) from Bos taurus (Bovine).